Consider the following 396-residue polypeptide: 1-deoxy-D-xylulose 5-phosphate reductoisomerase (396 aa).

8 residues coordinate NADPH: threonine 10, glycine 11, serine 12, isoleucine 13, glycine 36, lysine 37, asparagine 38, and asparagine 124. 1-deoxy-D-xylulose 5-phosphate is bound at residue lysine 125. Glutamate 126 is a binding site for NADPH. Aspartate 150 contacts Mn(2+). Positions 151, 152, 186, and 209 each coordinate 1-deoxy-D-xylulose 5-phosphate. Residue glutamate 152 participates in Mn(2+) binding. Glycine 215 provides a ligand contact to NADPH. Serine 222, asparagine 227, lysine 228, and glutamate 231 together coordinate 1-deoxy-D-xylulose 5-phosphate. Glutamate 231 serves as a coordination point for Mn(2+).

It belongs to the DXR family. Mg(2+) is required as a cofactor. Requires Mn(2+) as cofactor.

It carries out the reaction 2-C-methyl-D-erythritol 4-phosphate + NADP(+) = 1-deoxy-D-xylulose 5-phosphate + NADPH + H(+). It functions in the pathway isoprenoid biosynthesis; isopentenyl diphosphate biosynthesis via DXP pathway; isopentenyl diphosphate from 1-deoxy-D-xylulose 5-phosphate: step 1/6. Functionally, catalyzes the NADPH-dependent rearrangement and reduction of 1-deoxy-D-xylulose-5-phosphate (DXP) to 2-C-methyl-D-erythritol 4-phosphate (MEP). The protein is 1-deoxy-D-xylulose 5-phosphate reductoisomerase of Haemophilus ducreyi (strain 35000HP / ATCC 700724).